The chain runs to 232 residues: 2,3-bisphosphoglycerate-dependent phosphoglycerate mutase (232 aa).

Residues 8–15 (RHGESLWN), 21–22 (TG), Arg-60, 87–90 (ERHY), Lys-98, 114–115 (RR), and 183–184 (GN) each bind substrate. The Tele-phosphohistidine intermediate role is filled by His-9. Glu-87 acts as the Proton donor/acceptor in catalysis.

This sequence belongs to the phosphoglycerate mutase family. BPG-dependent PGAM subfamily.

The catalysed reaction is (2R)-2-phosphoglycerate = (2R)-3-phosphoglycerate. The protein operates within carbohydrate degradation; glycolysis; pyruvate from D-glyceraldehyde 3-phosphate: step 3/5. In terms of biological role, catalyzes the interconversion of 2-phosphoglycerate and 3-phosphoglycerate. In Clostridium beijerinckii (strain ATCC 51743 / NCIMB 8052) (Clostridium acetobutylicum), this protein is 2,3-bisphosphoglycerate-dependent phosphoglycerate mutase.